Reading from the N-terminus, the 364-residue chain is D-alanine--D-alanine ligase A (364 aa).

An ATP-grasp domain is found at 145 to 348; the sequence is KRLLRDAGLN…YTDLITRLIE (204 aa). Residue 175-230 coordinates ATP; the sequence is ESKLGLPLFVKPANQGSSVGVSKVTSEEQYTIAVDLAFEFDHKVIVEQGIKGREIE. The Mg(2+) site is built by Asp-302, Glu-315, and Asn-317.

This sequence belongs to the D-alanine--D-alanine ligase family. It depends on Mg(2+) as a cofactor. Mn(2+) serves as cofactor.

It is found in the cytoplasm. It catalyses the reaction 2 D-alanine + ATP = D-alanyl-D-alanine + ADP + phosphate + H(+). It functions in the pathway cell wall biogenesis; peptidoglycan biosynthesis. Its function is as follows. Cell wall formation. This is D-alanine--D-alanine ligase A from Escherichia coli O6:H1 (strain CFT073 / ATCC 700928 / UPEC).